The primary structure comprises 830 residues: Protein translocase subunit SecA (830 aa).

ATP is bound by residues Q86, 104–108 (GEGKT), and D491. 4 residues coordinate Zn(2+): C813, C815, C824, and C825.

It belongs to the SecA family. Monomer and homodimer. Part of the essential Sec protein translocation apparatus which comprises SecA, SecYEG and auxiliary proteins SecDF. Other proteins may also be involved. The cofactor is Zn(2+).

It localises to the cell membrane. It is found in the cytoplasm. It carries out the reaction ATP + H2O + cellular proteinSide 1 = ADP + phosphate + cellular proteinSide 2.. Its function is as follows. Part of the Sec protein translocase complex. Interacts with the SecYEG preprotein conducting channel. Has a central role in coupling the hydrolysis of ATP to the transfer of proteins into and across the cell membrane, serving as an ATP-driven molecular motor driving the stepwise translocation of polypeptide chains across the membrane. In Syntrophomonas wolfei subsp. wolfei (strain DSM 2245B / Goettingen), this protein is Protein translocase subunit SecA.